Consider the following 496-residue polypeptide: Probable glycine betaine transporter (496 aa).

12 consecutive transmembrane segments (helical) span residues 11-31 (TVLY…VFLP), 49-69 (FGWL…GIAI), 89-109 (FQWF…FWSV), 136-156 (VVFF…GLAL), 188-208 (AIDI…LGLG), 219-239 (IWGI…ITVI), 260-280 (VWLS…VFIL), 306-326 (WVGG…PFVG), 341-361 (FVFA…AIYG), 396-416 (LYAI…VGAA), 441-461 (FWGI…GTAA), and 468-488 (ASIA…YSIL).

The protein belongs to the BCCT transporter (TC 2.A.15) family.

It is found in the cell membrane. Functionally, probably acts in the uptake of glycine betaine. May function in the pathway that allows anaerobic methylotrophic growth of D.hafniense using glycine betaine. The sequence is that of Probable glycine betaine transporter from Desulfitobacterium hafniense (strain Y51).